Reading from the N-terminus, the 144-residue chain is Transcriptional regulator SlyA (144 aa).

The region spanning 2-135 (ESPLGSDLSR…LSQMISKLEK (134 aa)) is the HTH marR-type domain. A DNA-binding region (H-T-H motif) is located at residues 49–72 (QIQLAKAIGIEQPSLVRTLDQLEE).

The protein belongs to the SlyA family. Homodimer.

Its function is as follows. Transcription regulator that can specifically activate or repress expression of target genes. This Wigglesworthia glossinidia brevipalpis protein is Transcriptional regulator SlyA.